We begin with the raw amino-acid sequence, 214 residues long: MDRTIADLRKDYTLEGLSEIEVDPNPFIQFKKWFEQALAAQLPEPNAMTIATSTPDGQPSARMVLLKDFDEQGFVFFTNYNSRKGQELAENPQAALVFWWAELERQVRISGRVEKVSESESDYYFYSRPANSRLGAWVSNQSEIIASREVLEQRMQEFQHKYENQEIPRPAHWGGLRVIPSEIEFWQGRSSRLHDRLLYTLLNDHSWEIHRLSP.

Residues 9–12 (RKDY) and Lys-67 contribute to the substrate site. FMN contacts are provided by residues 62–67 (RMVLLK), 77–78 (FT), Arg-83, Lys-84, and Gln-106. Residues Tyr-124, Arg-128, and Ser-132 each contribute to the substrate site. Residues 141 to 142 (QS) and Trp-186 each bind FMN. 192-194 (RLH) lines the substrate pocket. FMN is bound at residue Arg-196.

It belongs to the pyridoxamine 5'-phosphate oxidase family. In terms of assembly, homodimer. FMN is required as a cofactor.

It carries out the reaction pyridoxamine 5'-phosphate + O2 + H2O = pyridoxal 5'-phosphate + H2O2 + NH4(+). The catalysed reaction is pyridoxine 5'-phosphate + O2 = pyridoxal 5'-phosphate + H2O2. It participates in cofactor metabolism; pyridoxal 5'-phosphate salvage; pyridoxal 5'-phosphate from pyridoxamine 5'-phosphate: step 1/1. Its pathway is cofactor metabolism; pyridoxal 5'-phosphate salvage; pyridoxal 5'-phosphate from pyridoxine 5'-phosphate: step 1/1. Catalyzes the oxidation of either pyridoxine 5'-phosphate (PNP) or pyridoxamine 5'-phosphate (PMP) into pyridoxal 5'-phosphate (PLP). This Nostoc sp. (strain PCC 7120 / SAG 25.82 / UTEX 2576) protein is Pyridoxine/pyridoxamine 5'-phosphate oxidase.